A 374-amino-acid polypeptide reads, in one-letter code: Putative F-box protein At3g17480 (374 aa).

An F-box domain is found at 6–52 (SSPMSVLTEDLVEDILSRVPATSLVRLRSTCKQWNAILNDRRFIKKH).

The sequence is that of Putative F-box protein At3g17480 from Arabidopsis thaliana (Mouse-ear cress).